The sequence spans 386 residues: 2,3,4,5-tetrahydropyridine-2,6-dicarboxylate N-succinyltransferase (386 aa).

Residue Glu-257 is the Acyl-anhydride intermediate of the active site. Residues Arg-259, Gly-274, Ser-277, Ala-300, 315-316, Gly-323, Lys-349, and 362-365 contribute to the succinyl-CoA site; these read DA and RQDS.

This sequence belongs to the type 2 tetrahydrodipicolinate N-succinyltransferase family. Homotrimer.

Its subcellular location is the cytoplasm. It catalyses the reaction (S)-2,3,4,5-tetrahydrodipicolinate + succinyl-CoA + H2O = (S)-2-succinylamino-6-oxoheptanedioate + CoA. It participates in amino-acid biosynthesis; L-lysine biosynthesis via DAP pathway; LL-2,6-diaminopimelate from (S)-tetrahydrodipicolinate (succinylase route): step 1/3. In terms of biological role, catalyzes the conversion of the cyclic tetrahydrodipicolinate (THDP) into the acyclic N-succinyl-L-2-amino-6-oxopimelate using succinyl-CoA. This is 2,3,4,5-tetrahydropyridine-2,6-dicarboxylate N-succinyltransferase from Campylobacter jejuni subsp. jejuni serotype O:2 (strain ATCC 700819 / NCTC 11168).